The sequence spans 109 residues: Putative double-stranded DNA mimic protein YciU (109 aa).

It belongs to the putative dsDNA mimic protein family.

Its function is as follows. May act as a double-stranded DNA (dsDNA) mimic. Probably regulates the activity of a dsDNA-binding protein. The polypeptide is Putative double-stranded DNA mimic protein YciU (Salmonella choleraesuis (strain SC-B67)).